We begin with the raw amino-acid sequence, 89 residues long: Small ribosomal subunit protein uS15 (89 aa).

It belongs to the universal ribosomal protein uS15 family. As to quaternary structure, part of the 30S ribosomal subunit. Forms a bridge to the 50S subunit in the 70S ribosome, contacting the 23S rRNA.

Functionally, one of the primary rRNA binding proteins, it binds directly to 16S rRNA where it helps nucleate assembly of the platform of the 30S subunit by binding and bridging several RNA helices of the 16S rRNA. Its function is as follows. Forms an intersubunit bridge (bridge B4) with the 23S rRNA of the 50S subunit in the ribosome. The polypeptide is Small ribosomal subunit protein uS15 (Blochmanniella pennsylvanica (strain BPEN)).